The following is a 776-amino-acid chain: Acetone carboxylase alpha subunit (776 aa).

As to quaternary structure, heterohexamer of two alpha, two beta and two gamma subunits. Fe cation serves as cofactor. Mg(2+) is required as a cofactor. The cofactor is Zn(2+). The N-terminus is blocked.

The enzyme catalyses acetone + hydrogencarbonate + 2 ATP + 3 H2O = acetoacetate + 2 AMP + 4 phosphate + 4 H(+). Its function is as follows. Catalyzes the carboxylation of acetone to form acetoacetate. Has a reduced activity on butanone, and no activity on 2-pentatone, 3-pentatone, 2-hexanone, chloroacetone, pyruvate, phosphoenolpyruvate, acetaldehyde, propionaldehyde and propylene oxide. This chain is Acetone carboxylase alpha subunit, found in Xanthobacter autotrophicus (strain ATCC BAA-1158 / Py2).